The primary structure comprises 237 residues: N-(5'-phosphoribosyl)anthranilate isomerase (237 aa).

Belongs to the TrpF family.

The catalysed reaction is N-(5-phospho-beta-D-ribosyl)anthranilate = 1-(2-carboxyphenylamino)-1-deoxy-D-ribulose 5-phosphate. Its pathway is amino-acid biosynthesis; L-tryptophan biosynthesis; L-tryptophan from chorismate: step 3/5. This is N-(5'-phosphoribosyl)anthranilate isomerase (TRP1) from Komagataella pastoris (Yeast).